The following is a 308-amino-acid chain: D-alanine--D-alanine ligase (308 aa).

The ATP-grasp domain maps to 103 to 302; that stretch reads KFVFRAAGLP…YGELVSWMVE (200 aa). Position 130 to 184 (130 to 184) interacts with ATP; that stretch reads MDPPYVIKPVSEGSSVGVFIVRAGDNRPPAELTSAEWNLGDEVMAERYIAGRELT. Residues Asp252, Glu269, and Asn271 each contribute to the Mg(2+) site.

It belongs to the D-alanine--D-alanine ligase family. It depends on Mg(2+) as a cofactor. Mn(2+) is required as a cofactor.

The protein resides in the cytoplasm. The catalysed reaction is 2 D-alanine + ATP = D-alanyl-D-alanine + ADP + phosphate + H(+). The protein operates within cell wall biogenesis; peptidoglycan biosynthesis. Functionally, cell wall formation. The sequence is that of D-alanine--D-alanine ligase from Parvibaculum lavamentivorans (strain DS-1 / DSM 13023 / NCIMB 13966).